We begin with the raw amino-acid sequence, 354 residues long: 3'-5' exonuclease (354 aa).

A disordered region spans residues 1 to 120; the sequence is MERFLTKMPI…PSPEKEKPEK (120 aa). Basic and acidic residues-rich tracts occupy residues 13–30 and 37–50; these read KANE…ETPK and KKDT…KENA. The segment covering 59 to 70 has biased composition (basic residues); sequence TKGRPGRPAAKR. Positions 71–91 are enriched in basic and acidic residues; that stretch reads KNLDTPDVKDEKIAMEEENPP. A phosphoserine mark is found at serine 104, serine 110, and serine 112. The region spanning 149-314 is the 3'-5' exonuclease domain; that stretch reads WVEKQKDDVV…GQVIYRELER (166 aa). Residues aspartate 163, glutamate 165, and aspartate 301 each contribute to the Mg(2+) site.

The protein belongs to the WRNexo family.

Its subcellular location is the nucleus. In terms of biological role, has exonuclease activity on both single-stranded and duplex templates bearing overhangs, but not blunt ended duplex DNA, and cleaves in a 3'-5' direction. Essential for the formation of DNA replication focal centers. Has an important role in maintaining genome stability. This is 3'-5' exonuclease from Drosophila simulans (Fruit fly).